The chain runs to 132 residues: Glycine cleavage system H protein (132 aa).

A Lipoyl-binding domain is found at 27–109 (FATIGISAFA…FDFGWILKVK (83 aa)). K68 is subject to N6-lipoyllysine.

The protein belongs to the GcvH family. In terms of assembly, the glycine cleavage system is composed of four proteins: P, T, L and H. It depends on (R)-lipoate as a cofactor.

In terms of biological role, the glycine cleavage system catalyzes the degradation of glycine. The H protein shuttles the methylamine group of glycine from the P protein to the T protein. The sequence is that of Glycine cleavage system H protein from Rhodopirellula baltica (strain DSM 10527 / NCIMB 13988 / SH1).